Consider the following 594-residue polypeptide: Alanine--tRNA ligase (594 aa).

Residues histidine 456, histidine 460, cysteine 558, and histidine 562 each contribute to the Zn(2+) site.

The protein belongs to the class-II aminoacyl-tRNA synthetase family. It depends on Zn(2+) as a cofactor.

The protein localises to the cytoplasm. The enzyme catalyses tRNA(Ala) + L-alanine + ATP = L-alanyl-tRNA(Ala) + AMP + diphosphate. Functionally, catalyzes the attachment of alanine to tRNA(Ala) in a two-step reaction: alanine is first activated by ATP to form Ala-AMP and then transferred to the acceptor end of tRNA(Ala). Also edits incorrectly charged Ser-tRNA(Ala) and Gly-tRNA(Ala) via its editing domain. The protein is Alanine--tRNA ligase (alaS) of Borreliella burgdorferi (strain ATCC 35210 / DSM 4680 / CIP 102532 / B31) (Borrelia burgdorferi).